We begin with the raw amino-acid sequence, 570 residues long: MSEKHPGPLVVEGKLTDAERMKLESNYLRGTIAEDLNDGLTGGFKGDNFLLIRFHGMYQQDDRDIRAERAAQKLEPRHAMLLRCRLPGGVITTTQWKAIDKFAADNTIYGSIRLTNRQTFQFHGILKKNVKPVHQMLHSVGLDALATANDMNRNVLCTSNPYESQLHAEAYEWAKKISEHLLPRTRAYAEIWLDQKKVATTDEEPILGQTYLPRKFKTTVVIPPQNDIDLHANDMNFVAIAENGKLVGFNLLVGGGLSIEHGNKKTYARTASEFGYLPLEHTLAVAEAVVTTQRDWGNRTDRKNAKTKYTLERVGVETFKAEVERRAGIKFEPIRPYEFTGRGDRIGWVKGIDDKWHLTLFIENGRILDYPGRPLKTGLLEIAKIHKGEFRITANQNLIVASVPEDQKARIEKLARDHGLMNAVTPQRENSMACVSFPTCPLAMAEAERFLPSFIDKVEGVMNKHGVSDEHIVTRVTGCPNGCGRAMLAEVGLVGKAPGRYNLHLGGNRSGTRIPRMYRENITESEILDSLDELVGRWAKEREAGEGFGDFTVRAGIIRPVLDPARDFWE.

Positions 434, 440, 479, and 483 each coordinate [4Fe-4S] cluster. C483 is a binding site for siroheme.

It belongs to the nitrite and sulfite reductase 4Fe-4S domain family. Alpha(8)-beta(8). The alpha component is a flavoprotein, the beta component is a hemoprotein. The cofactor is siroheme. Requires [4Fe-4S] cluster as cofactor.

It catalyses the reaction hydrogen sulfide + 3 NADP(+) + 3 H2O = sulfite + 3 NADPH + 4 H(+). It participates in sulfur metabolism; hydrogen sulfide biosynthesis; hydrogen sulfide from sulfite (NADPH route): step 1/1. In terms of biological role, component of the sulfite reductase complex that catalyzes the 6-electron reduction of sulfite to sulfide. This is one of several activities required for the biosynthesis of L-cysteine from sulfate. This Klebsiella pneumoniae (strain 342) protein is Sulfite reductase [NADPH] hemoprotein beta-component 1.